A 387-amino-acid polypeptide reads, in one-letter code: Capsid protein (387 aa).

A compositionally biased stretch (basic residues) spans 1-33 (MARTKSKPRKRTTVRKARRSVKRRTTTKGTKRK). 2 disordered regions span residues 1 to 47 (MART…RGVA) and 365 to 387 (KSAK…REFN). Short sequence motifs (nuclear localization signal) lie at residues 8–15 (PRKRTTVR) and 30–37 (TKRKTAGD). Positions 370 to 379 (NDQLNNNQDA) are enriched in low complexity.

Its subcellular location is the host nucleus. It is found in the virion. Its function is as follows. Self-assembles to form the virion icosahedral capsid. In Chaetoceros protobacilladnavirus 2 (Chaetoceros sp. DNA virus 7), this protein is Capsid protein.